The sequence spans 483 residues: Trimethylamine methyltransferase MttB (483 aa).

A non-standard amino acid (pyrrolysine) is located at residue Pyl-334.

This sequence belongs to the trimethylamine methyltransferase family. As to quaternary structure, can form a complex with MttC.

It carries out the reaction Co(I)-[trimethylamine-specific corrinoid protein] + trimethylamine + H(+) = methyl-Co(III)-[trimethylamine-specific corrinoid protein] + dimethylamine. The protein operates within one-carbon metabolism; methanogenesis from trimethylamine. Functionally, catalyzes the transfer of a methyl group from trimethylamine to the corrinoid cofactor of MttC. In Methanosarcina thermophila, this protein is Trimethylamine methyltransferase MttB (mttB).